Consider the following 413-residue polypeptide: Mitochondrial carrier protein MTM1 (413 aa).

3 Solcar repeats span residues 59–193 (IGFT…FRNR), 205–305 (MTFC…IKKR), and 318–406 (GVFG…VKYV). Transmembrane regions (helical) follow at residues 65 to 85 (VFSA…LDVV), 170 to 190 (NAGL…YDMF), 204 to 226 (AMTF…TVCY), 284 to 304 (QLAR…PIKK), 316 to 336 (LVGV…IAAA), and 378 to 399 (LFMG…VVSF).

This sequence belongs to the mitochondrial carrier (TC 2.A.29) family. In terms of tissue distribution, ubiquitous.

The protein resides in the mitochondrion inner membrane. In terms of biological role, involved in the mitochondrial activation of MSD1 by specifically facilitating insertion of the essential manganese cofactor. Has the ability to activate iron regulon in an iron-dependent manner. The polypeptide is Mitochondrial carrier protein MTM1 (MTM1) (Arabidopsis thaliana (Mouse-ear cress)).